The sequence spans 430 residues: GTPase Obg (430 aa).

The Obg domain occupies 1–158 (MFVDQVKISL…LDVSLELKLL (158 aa)). Residues 118–145 (KGGRGGRGNSRFATPRNPAPDFSEKGEP) form a disordered region. Residues 159–329 (ADVGLVGFPS…LLYAIADKLE (171 aa)) enclose the OBG-type G domain. Residues 165 to 172 (GFPSVGKS), 190 to 194 (FTTIK), 212 to 215 (DLPG), 282 to 285 (NKMD), and 310 to 312 (STI) each bind GTP. 2 residues coordinate Mg(2+): Ser-172 and Thr-192. Positions 352–430 (KHTPSQDKFT…ILGGEFEFVE (79 aa)) constitute an OCT domain.

It belongs to the TRAFAC class OBG-HflX-like GTPase superfamily. OBG GTPase family. As to quaternary structure, monomer. The cofactor is Mg(2+).

It localises to the cytoplasm. Functionally, an essential GTPase which binds GTP, GDP and possibly (p)ppGpp with moderate affinity, with high nucleotide exchange rates and a fairly low GTP hydrolysis rate. Plays a role in control of the cell cycle, stress response, ribosome biogenesis and in those bacteria that undergo differentiation, in morphogenesis control. This is GTPase Obg from Staphylococcus aureus (strain COL).